The sequence spans 92 residues: Putative transcription elongation factor S-II-like protein 81R (92 aa).

A TFIIS-type zinc finger spans residues 51–91; it reads GTVKCPGCGSRRVHALQRQTRSADEPMTLFAMCSECGKRWT. Zn(2+) is bound by residues Cys55, Cys58, Cys83, and Cys86.

The polypeptide is Putative transcription elongation factor S-II-like protein 81R (Dryophytes versicolor (chameleon treefrog)).